The chain runs to 243 residues: Asnovolin H synthase nvfL (243 aa).

7 helical membrane passes run 20-42 (ANTLRIMCAISWNISYMSMAYYS), 51-71 (ALIPLCNNIAWEFVYSFIHCP), 75-95 (FVRIENTGWFLLNIVVMYAAI), 112-132 (LPFIFAVGISAMIAGHLALAA), 138-160 (IAFVWSAKGCQLVLSTGALSQLL), 169-189 (SYVVWLSRYLGTVFIDVMVTI), and 205-225 (LLLWFMAVFHLLDWTYGFCFY).

It belongs to the paxB family.

Its subcellular location is the membrane. It catalyses the reaction (3R)-[(10S)-11-epoxyfarnesyl]-2,3,5-trimethyl-6-oxido-4-oxocyclohexa-1,5-diene-1-carboxylate + H(+) = asnovolin H. Its pathway is secondary metabolite biosynthesis; terpenoid biosynthesis. Terpene cyclase; part of the gene cluster that mediates the biosynthesis of novofumigatonin, a heavily oxygenated meroterpenoid containing a unique orthoester moiety. The first step of the pathway is the synthesis of 3,5-dimethylorsellinic acid (DMOA) by the polyketide synthase nvfA via condensation of one acetyl-CoA starter unit with 3 malonyl-CoA units and 2 methylations. DMOA is then converted to farnesyl-DMOA by the farnesyltransferase nvfB. Epoxydation by FAD-dependent monooxygenase nvfK, followed by a protonation-initiated cyclization catalyzed by the terpene cyclase nvfL leads to the production of asnavolin H. The short chain dehydrogenase nvfC then as a 3-OH dehydrogenase of asnovolin H to yield chemesin D. There are two branches to synthesize asnovolin A from chemesin D. In one branch, chemesin D undergoes Baeyer-Villiger oxidation by nvfH, methylation by nvfJ, and enoyl reduction by the nvfM D enoylreductase that reduces the double bond between C-5'and C-6', to form respectively asnovolin I, asnovolin K, and asnovolin A. In the other branch, the methylation precedes the Baeyer-Villiger oxidation and the enoyl reduction to yield asnovolin A via the asnovolin J intermediate. Asnovolin A is further converted to fumigatonoid A by the Fe(II)/2-oxoglutarate-dependent dioxygenase nvfI that catalyzes an endoperoxidation reaction. The alpha/beta hydrolase nvfD then acts as an epimerase that converts fumigatonoid A to its C-5' epimer, which then undergoes spontaneous or nvfD-catalyzed lactonization. The following step utilizes the ketoreductase nvfG to produce fumigatonoid B. The dioxygenase nvfE further converts fumigatonoid B into fumigatonoid C. Finally the Fe(II)/2-oxoglutarate-dependent dioxygenase nvfF catalyzes two rounds of oxidation to transform fumigatonoid C into the end product, novofumigatonin A. This is Asnovolin H synthase nvfL from Aspergillus novofumigatus (strain IBT 16806).